Consider the following 338-residue polypeptide: Holliday junction branch migration complex subunit RuvB (338 aa).

Residues methionine 1–isoleucine 22 are disordered. A large ATPase domain (RuvB-L) region spans residues alanine 4–tyrosine 187. Residues arginine 27, glycine 68, lysine 71, threonine 72, threonine 73, glutamate 134–tyrosine 136, arginine 177, tyrosine 187, and arginine 224 contribute to the ATP site. Mg(2+) is bound at residue threonine 72. Positions asparagine 188–aspartate 258 are small ATPAse domain (RuvB-S). The tract at residues serine 261 to lysine 338 is head domain (RuvB-H). DNA-binding residues include arginine 297, arginine 316, and arginine 321.

This sequence belongs to the RuvB family. Homohexamer. Forms an RuvA(8)-RuvB(12)-Holliday junction (HJ) complex. HJ DNA is sandwiched between 2 RuvA tetramers; dsDNA enters through RuvA and exits via RuvB. An RuvB hexamer assembles on each DNA strand where it exits the tetramer. Each RuvB hexamer is contacted by two RuvA subunits (via domain III) on 2 adjacent RuvB subunits; this complex drives branch migration. In the full resolvosome a probable DNA-RuvA(4)-RuvB(12)-RuvC(2) complex forms which resolves the HJ.

The protein resides in the cytoplasm. It carries out the reaction ATP + H2O = ADP + phosphate + H(+). Its function is as follows. The RuvA-RuvB-RuvC complex processes Holliday junction (HJ) DNA during genetic recombination and DNA repair, while the RuvA-RuvB complex plays an important role in the rescue of blocked DNA replication forks via replication fork reversal (RFR). RuvA specifically binds to HJ cruciform DNA, conferring on it an open structure. The RuvB hexamer acts as an ATP-dependent pump, pulling dsDNA into and through the RuvAB complex. RuvB forms 2 homohexamers on either side of HJ DNA bound by 1 or 2 RuvA tetramers; 4 subunits per hexamer contact DNA at a time. Coordinated motions by a converter formed by DNA-disengaged RuvB subunits stimulates ATP hydrolysis and nucleotide exchange. Immobilization of the converter enables RuvB to convert the ATP-contained energy into a lever motion, pulling 2 nucleotides of DNA out of the RuvA tetramer per ATP hydrolyzed, thus driving DNA branch migration. The RuvB motors rotate together with the DNA substrate, which together with the progressing nucleotide cycle form the mechanistic basis for DNA recombination by continuous HJ branch migration. Branch migration allows RuvC to scan DNA until it finds its consensus sequence, where it cleaves and resolves cruciform DNA. This is Holliday junction branch migration complex subunit RuvB from Shewanella sediminis (strain HAW-EB3).